Reading from the N-terminus, the 494-residue chain is Lysine--tRNA ligase (494 aa).

Mg(2+) contacts are provided by Glu-405 and Glu-412.

This sequence belongs to the class-II aminoacyl-tRNA synthetase family. In terms of assembly, homodimer. Mg(2+) serves as cofactor.

The protein localises to the cytoplasm. The enzyme catalyses tRNA(Lys) + L-lysine + ATP = L-lysyl-tRNA(Lys) + AMP + diphosphate. This chain is Lysine--tRNA ligase (lysS), found in Geobacillus stearothermophilus (Bacillus stearothermophilus).